Reading from the N-terminus, the 551-residue chain is uncharacterized protein (551 aa).

6 helical membrane-spanning segments follow: residues 1 to 21 (MIAY…IVNS), 25 to 45 (WTYF…LMVS), 99 to 119 (GALF…FGFN), 124 to 144 (LGVL…SLMW), 266 to 286 (FAFL…GVFY), and 490 to 510 (FLDL…SAED).

The protein localises to the cell membrane. This is an uncharacterized protein from Haemophilus influenzae (strain ATCC 51907 / DSM 11121 / KW20 / Rd).